Reading from the N-terminus, the 396-residue chain is Ubiquitin-like modifier-activating enzyme 5 (396 aa).

ATP-binding residues include Gly-76, Asp-97, Lys-120, Asn-143, and Asn-177. Cys-219 and Cys-222 together coordinate Zn(2+). Cys-243 (glycyl thioester intermediate) is an active-site residue. Zn(2+)-binding residues include Cys-296 and Cys-301.

The protein belongs to the ubiquitin-activating E1 family. UBA5 subfamily.

Its function is as follows. E1-like enzyme which activates UFM1. This chain is Ubiquitin-like modifier-activating enzyme 5, found in Drosophila ananassae (Fruit fly).